A 295-amino-acid chain; its full sequence is Very long chain fatty acid elongase 5 (295 aa).

Helical transmembrane passes span 26 to 46 (WLLLDNYVPTIFFTALYLFIV), 64 to 84 (ILVVYNLGLTLLSFYMFYELV), 112 to 132 (VLWWYYFSKLIEFMDTFFFIL), 150 to 170 (MLNIWWFVMNWVPCGHSFFGA), 172 to 192 (LNSFIHVLMYSYYGLSAIPAI), 207 to 223 (LTQFVLTMTQTTCAMIW), and 227 to 247 (FPMGWLYFQNSYMISLIILFT). The tract at residues 265–295 (YQNGSASAVNGYTNSFSSLEDNVKQRKQRQN) is disordered. The span at 266–284 (QNGSASAVNGYTNSFSSLE) shows a compositional bias: polar residues.

It belongs to the ELO family. ELOVL5 subfamily.

The protein localises to the endoplasmic reticulum membrane. The protein resides in the cell projection. Its subcellular location is the dendrite. The enzyme catalyses a very-long-chain acyl-CoA + malonyl-CoA + H(+) = a very-long-chain 3-oxoacyl-CoA + CO2 + CoA. The catalysed reaction is (6Z,9Z,12Z)-octadecatrienoyl-CoA + malonyl-CoA + H(+) = (8Z,11Z,14Z)-3-oxoeicosatrienoyl-CoA + CO2 + CoA. It catalyses the reaction (9Z,12Z,15Z)-octadecatrienoyl-CoA + malonyl-CoA + H(+) = (11Z,14Z,17Z)-3-oxoeicosatrienoyl-CoA + CO2 + CoA. It carries out the reaction (9Z)-hexadecenoyl-CoA + malonyl-CoA + H(+) = 3-oxo-(11Z)-octadecenoyl-CoA + CO2 + CoA. The enzyme catalyses (9Z)-octadecenoyl-CoA + malonyl-CoA + H(+) = 3-oxo-(11Z)-eicosenoyl-CoA + CO2 + CoA. The catalysed reaction is (11Z)-octadecenoyl-CoA + malonyl-CoA + H(+) = 3-oxo-(13Z)-eicosenoyl-CoA + CO2 + CoA. It catalyses the reaction (9Z,12Z)-octadecadienoyl-CoA + malonyl-CoA + H(+) = (11Z,14Z)-3-oxoicosa-11,14-dienoyl-CoA + CO2 + CoA. It carries out the reaction (6Z,9Z,12Z,15Z)-octadecatetraenoyl-CoA + malonyl-CoA + H(+) = (8Z,11Z,14Z,17Z)-3-oxoicosatetraenoyl-CoA + CO2 + CoA. The enzyme catalyses (5Z,8Z,11Z,14Z)-eicosatetraenoyl-CoA + malonyl-CoA + H(+) = (7Z,10Z,13Z,16Z)-3-oxodocosatetraenoyl-CoA + CO2 + CoA. The catalysed reaction is (5Z,8Z,11Z,14Z,17Z)-eicosapentaenoyl-CoA + malonyl-CoA + H(+) = 3-oxo-(7Z,10Z,13Z,16Z,19Z)-docosapentaenoyl-CoA + CO2 + CoA. The protein operates within lipid metabolism; polyunsaturated fatty acid biosynthesis. In terms of biological role, catalyzes the first and rate-limiting reaction of the four reactions that constitute the long-chain fatty acids elongation cycle. This endoplasmic reticulum-bound enzymatic process allows the addition of 2 carbons to the chain of long- and very long-chain fatty acids (VLCFAs) per cycle. Condensing enzyme that acts specifically toward polyunsaturated acyl-CoA with the higher activity toward C18:3(n-6) acyl-CoA. May participate in the production of monounsaturated and of polyunsaturated VLCFAs of different chain lengths that are involved in multiple biological processes as precursors of membrane lipids and lipid mediators. In conditions where the essential linoleic and alpha linoleic fatty acids are lacking it is also involved in the synthesis of Mead acid from oleic acid. This Xenopus laevis (African clawed frog) protein is Very long chain fatty acid elongase 5.